Consider the following 264-residue polypeptide: Thymidylate synthase (264 aa).

R21 provides a ligand contact to dUMP. H51 provides a ligand contact to (6R)-5,10-methylene-5,6,7,8-tetrahydrofolate. C146 functions as the Nucleophile in the catalytic mechanism. Residues 166-169, N177, and 207-209 contribute to the dUMP site; these read RSAD and HIY. Residue D169 coordinates (6R)-5,10-methylene-5,6,7,8-tetrahydrofolate. A263 contacts (6R)-5,10-methylene-5,6,7,8-tetrahydrofolate.

Belongs to the thymidylate synthase family. Bacterial-type ThyA subfamily. As to quaternary structure, homodimer.

The protein localises to the cytoplasm. It catalyses the reaction dUMP + (6R)-5,10-methylene-5,6,7,8-tetrahydrofolate = 7,8-dihydrofolate + dTMP. Its pathway is pyrimidine metabolism; dTTP biosynthesis. Functionally, catalyzes the reductive methylation of 2'-deoxyuridine-5'-monophosphate (dUMP) to 2'-deoxythymidine-5'-monophosphate (dTMP) while utilizing 5,10-methylenetetrahydrofolate (mTHF) as the methyl donor and reductant in the reaction, yielding dihydrofolate (DHF) as a by-product. This enzymatic reaction provides an intracellular de novo source of dTMP, an essential precursor for DNA biosynthesis. This Brucella canis (strain ATCC 23365 / NCTC 10854 / RM-666) protein is Thymidylate synthase.